The following is a 629-amino-acid chain: Methionine--tRNA ligase (629 aa).

The 'HIGH' region signature appears at 10–20 (YYVNSEPHIGS). Residues C125, C128, C146, and C149 each coordinate Zn(2+). A 'KMSKS' region motif is present at residues 297 to 301 (KISKS). Residue K300 participates in ATP binding. One can recognise a tRNA-binding domain in the interval 529 to 629 (DFSKVDLRIA…GEITPGAKVS (101 aa)).

This sequence belongs to the class-I aminoacyl-tRNA synthetase family. MetG type 2A subfamily. As to quaternary structure, homodimer. Requires Zn(2+) as cofactor.

It is found in the cytoplasm. It catalyses the reaction tRNA(Met) + L-methionine + ATP = L-methionyl-tRNA(Met) + AMP + diphosphate. Functionally, is required not only for elongation of protein synthesis but also for the initiation of all mRNA translation through initiator tRNA(fMet) aminoacylation. In Thermotoga maritima (strain ATCC 43589 / DSM 3109 / JCM 10099 / NBRC 100826 / MSB8), this protein is Methionine--tRNA ligase (metG).